We begin with the raw amino-acid sequence, 225 residues long: RNA chaperone ProQ (225 aa).

The segment at 107 to 169 (KARVQAQRAA…VAAKAPREER (63 aa)) is disordered. Residues 109-118 (RVQAQRAAQQ) are compositionally biased toward low complexity. The segment covering 137–146 (RERKPRPQQP) has biased composition (basic residues). Over residues 147 to 156 (RRKEGAEQRK) the composition is skewed to basic and acidic residues.

This sequence belongs to the ProQ family.

The protein resides in the cytoplasm. RNA chaperone with significant RNA binding, RNA strand exchange and RNA duplexing activities. May regulate ProP activity through an RNA-based, post-transcriptional mechanism. This is RNA chaperone ProQ from Klebsiella pneumoniae subsp. pneumoniae (strain ATCC 700721 / MGH 78578).